Here is a 299-residue protein sequence, read N- to C-terminus: tRNA dimethylallyltransferase (299 aa).

Glycine 8–threonine 15 contributes to the ATP binding site. Threonine 10 to threonine 15 contributes to the substrate binding site. The tract at residues aspartate 33–glutamine 36 is interaction with substrate tRNA.

This sequence belongs to the IPP transferase family. As to quaternary structure, monomer. Mg(2+) is required as a cofactor.

The catalysed reaction is adenosine(37) in tRNA + dimethylallyl diphosphate = N(6)-dimethylallyladenosine(37) in tRNA + diphosphate. Catalyzes the transfer of a dimethylallyl group onto the adenine at position 37 in tRNAs that read codons beginning with uridine, leading to the formation of N6-(dimethylallyl)adenosine (i(6)A). This Anaeromyxobacter dehalogenans (strain 2CP-C) protein is tRNA dimethylallyltransferase.